A 294-amino-acid polypeptide reads, in one-letter code: MNFQDVILTLQNFWARRGCAIQQPFDSECGAGTFNPATFLRVIGPEPWNVAYVEPSRRPTDGRYGENPNRLQHYFQFQVILKPSPDNVQEIYIDSLRALGINPAEHDIRFVEDDWESPTLGAWGLGWEVWLNGMEVTQFTYFQQVGGIDLSPTSVEITYGLERLCMYLQEKESVYDLMWNDTVTYGHIYHRNEVEMSRYNFEESDAGMLLELFNAYERECTRLCEKQLLWPAYDYCLKCSHTFNLLDARGAISITERTGYIGRVRVLASSVARLYAAQREEMGYPMLNTGIRKG.

Belongs to the class-II aminoacyl-tRNA synthetase family. As to quaternary structure, tetramer of two alpha and two beta subunits.

The protein resides in the cytoplasm. The enzyme catalyses tRNA(Gly) + glycine + ATP = glycyl-tRNA(Gly) + AMP + diphosphate. This Oleidesulfovibrio alaskensis (strain ATCC BAA-1058 / DSM 17464 / G20) (Desulfovibrio alaskensis) protein is Glycine--tRNA ligase alpha subunit.